A 256-amino-acid chain; its full sequence is Ubiquinone/menaquinone biosynthesis C-methyltransferase UbiE (256 aa).

S-adenosyl-L-methionine contacts are provided by residues threonine 79, aspartate 100, and 128-129; that span reads DA.

Belongs to the class I-like SAM-binding methyltransferase superfamily. MenG/UbiE family.

The catalysed reaction is a 2-demethylmenaquinol + S-adenosyl-L-methionine = a menaquinol + S-adenosyl-L-homocysteine + H(+). The enzyme catalyses a 2-methoxy-6-(all-trans-polyprenyl)benzene-1,4-diol + S-adenosyl-L-methionine = a 5-methoxy-2-methyl-3-(all-trans-polyprenyl)benzene-1,4-diol + S-adenosyl-L-homocysteine + H(+). It functions in the pathway quinol/quinone metabolism; menaquinone biosynthesis; menaquinol from 1,4-dihydroxy-2-naphthoate: step 2/2. The protein operates within cofactor biosynthesis; ubiquinone biosynthesis. Functionally, methyltransferase required for the conversion of demethylmenaquinol (DMKH2) to menaquinol (MKH2) and the conversion of 2-polyprenyl-6-methoxy-1,4-benzoquinol (DDMQH2) to 2-polyprenyl-3-methyl-6-methoxy-1,4-benzoquinol (DMQH2). The polypeptide is Ubiquinone/menaquinone biosynthesis C-methyltransferase UbiE (Ectopseudomonas mendocina (strain ymp) (Pseudomonas mendocina)).